We begin with the raw amino-acid sequence, 562 residues long: O-fucosyltransferase 4 (562 aa).

The segment at Ser10–Gln46 is disordered. Residues Lys37–Gln46 show a composition bias toward low complexity. The chain crosses the membrane as a helical; Signal-anchor for type II membrane protein span at residues Gly67 to Ala87. N-linked (GlcNAc...) asparagine glycans are attached at residues Asn122, Asn146, Asn185, and Asn239. His332–Arg334 is a binding site for substrate. N-linked (GlcNAc...) asparagine glycans are attached at residues Asn404, Asn420, Asn450, and Asn555.

The protein belongs to the glycosyltransferase GT106 family.

The protein localises to the membrane. It functions in the pathway glycan metabolism. The sequence is that of O-fucosyltransferase 4 from Arabidopsis thaliana (Mouse-ear cress).